The sequence spans 265 residues: Hydroxyethylthiazole kinase (265 aa).

Met50 contacts substrate. Arg125 and Thr171 together coordinate ATP. Gly198 contacts substrate.

Belongs to the Thz kinase family. Requires Mg(2+) as cofactor.

It catalyses the reaction 5-(2-hydroxyethyl)-4-methylthiazole + ATP = 4-methyl-5-(2-phosphooxyethyl)-thiazole + ADP + H(+). Its pathway is cofactor biosynthesis; thiamine diphosphate biosynthesis; 4-methyl-5-(2-phosphoethyl)-thiazole from 5-(2-hydroxyethyl)-4-methylthiazole: step 1/1. Catalyzes the phosphorylation of the hydroxyl group of 4-methyl-5-beta-hydroxyethylthiazole (THZ). The chain is Hydroxyethylthiazole kinase from Salmonella arizonae (strain ATCC BAA-731 / CDC346-86 / RSK2980).